The sequence spans 201 residues: MICOS complex subunit MIC27 (201 aa).

The transit peptide at 1 to 31 (MTQDKPIVETISNAGEQVTNVFGQFWQLVTS) directs the protein to the mitochondrion. Residues 32 to 117 (KNTTNNGDSK…KCNAYLTEEW (86 aa)) are Cytoplasmic-facing. The helical transmembrane segment at 118–138 (TALPKAAAITVGGMAGFVLGL) threads the bilayer. The Mitochondrial intermembrane segment spans residues 139–145 (KRGPVGR). The chain crosses the membrane as a helical span at residues 146–166 (LLTTTIGLATMAAFCYPIEAV). Residues 167 to 201 (DVAKTGRAHAEQTWYSFQESPTPSAIVKTNLSPPK) are Cytoplasmic-facing.

The protein belongs to the apolipoprotein O/MICOS complex subunit Mic27 family. As to quaternary structure, component of the mitochondrial contact site and cristae organizing system (MICOS) complex.

Its subcellular location is the mitochondrion outer membrane. In terms of biological role, sustains mitochondrial morphology probably through maintaining cristae morphology. May act as a component of the MICOS complex, a large protein complex of the mitochondria. The polypeptide is MICOS complex subunit MIC27 (Caenorhabditis elegans).